The following is a 326-amino-acid chain: Nucleotide sugar transporter SLC35D2 (326 aa).

Topologically, residues 1 to 15 (MEEPNAAPLPSRLAR) are extracellular. A helical transmembrane segment spans residues 16-36 (LLSALFYGTCSFLIVLVNKAL). Topologically, residues 37–41 (LTTYG) are cytoplasmic. Residues 42–62 (FPSPIVLGIGQMATTIMILYV) traverse the membrane as a helical segment. Over 63 to 130 (FKLNKIIHFP…LLEAIILGTQ (68 aa)) the chain is Extracellular. The chain crosses the membrane as a helical span at residues 131–151 (YSLNIILSVLAIVLGAFIAAG). Residues 152–155 (SDLT) lie on the Cytoplasmic side of the membrane. Residues 156–176 (FNLEGYVFVFLNDIFTAANGV) traverse the membrane as a helical segment. Topologically, residues 177–189 (YTKQKMDPKELGK) are extracellular. A helical transmembrane segment spans residues 190-210 (YGVLFYNACFMLIPTVIISVS). Topologically, residues 211–225 (TGDFQQATEFRHWKN) are cytoplasmic. Residues 226-246 (VLFIIQFLLSCLLGFLLMYST) form a helical membrane-spanning segment. Topologically, residues 247 to 253 (ALCSYYN) are extracellular. The chain crosses the membrane as a helical span at residues 254-276 (SALTTAVVGAIKNVSVAYIGMLV). At 277–280 (GGDY) the chain is on the cytoplasmic side. The helical transmembrane segment at 281–303 (IFSLLNFIGLNICMAGGLRYSFL) threads the bilayer. Residues 304 to 326 (TLSSQLKPKQPVDEESIPLDLKS) lie on the Extracellular side of the membrane.

The protein belongs to the TPT transporter family. SLC35D subfamily.

It localises to the golgi apparatus membrane. The enzyme catalyses UMP(out) + UDP-N-acetyl-alpha-D-glucosamine(in) = UMP(in) + UDP-N-acetyl-alpha-D-glucosamine(out). It carries out the reaction UMP(out) + UDP-alpha-D-glucose(in) = UMP(in) + UDP-alpha-D-glucose(out). Functionally, nucleotide sugar antiporter transporting UDP-N-acetylglucosamine (UDP-GlcNAc) and UDP-glucose (UDP-Glc) from the cytosol into the lumen of the Golgi in exchange of UMP. By supplying UDP-N-acetylglucosamine, a donor substrate to heparan sulfate synthases, probably takes part in the synthesis of these glycoconjugates. The protein is Nucleotide sugar transporter SLC35D2 of Mus musculus (Mouse).